Reading from the N-terminus, the 734-residue chain is MALRFPRFSQGLAQDPTTRRIWFGIATAHDFESHDDITEERLYQNIFASHFGQLAIIFLWTSGNLFHVAWQGNFESWVQDPLHVRPIAHAIWDPHFGQPAVEAFTRGGALGPVNIAYSGVYQWWYTIGLRTNEDLYTGALFLLFLSAISLIAGWLHLQPKWKPSVSWFKNAESRLNHHLSGLFGVSSLAWTGHLVHVAIPASRGEYVRWNNLLDVLPHPQGLGPLFTGQWNLYAQNPDSSSHLFGTSQGAGTAILTLLGGFHPQTQSLWLTDMAHHHLAIAFIFLVAGHMYRTNFGIGHSMKDLLDAHIPPGGRLGRGHKGLYDTINNSLHFQLGLALASLGVITSLVAQHMYSLPAYAFIAQDFTTQAALYTHHQYIAGFIMTGAFAHGAIFFIRDYSPEQNEDNVLARMLDHKEAIISHLSWASLFLGFHTLGLYVHNDVMLAFGTPEKQILIEPIFAQWIQSAHGKTSYGFDVLLSSTNGPAFNAGRSIWLPGWLNAVNETSNSLFLTIGPGDFLVHHAIALGLHTTTLILVKGALDARGSKLMPDKKDFGYSFPCDGPGRGGTCDISAWDAFYLAVFWMLNTIGWVTFYWHWKHITLWQGNVSQFNESSTYLMGWLRDYLWLNSSQLINGYNPFGMNSLSVWAWMFLFGHLVWATGFMFLISWRGYWQELIETLAWAHERTPLANLIRWRDKPVALSIVQARLVGLAHFSVGYIFTYAAFLIASTSGKFG.

Transmembrane regions (helical) follow at residues 46–69, 135–158, 175–199, 273–291, 330–353, 369–395, 417–439, and 517–535; these read IFASHFGQLAIIFLWTSGNLFHVA, LYTGALFLLFLSAISLIAGWLHLQ, LNHHLSGLFGVSSLAWTGHLVHVAI, MAHHHLAIAFIFLVAGHMY, LHFQLGLALASLGVITSLVAQHMY, AALYTHHQYIAGFIMTGAFAHGAIFFI, AIISHLSWASLFLGFHTLGLYVH, and FLVHHAIALGLHTTTLILV. Residues Cys559 and Cys568 each coordinate [4Fe-4S] cluster. 2 helical membrane passes run 575–596 and 643–665; these read AFYLAVFWMLNTIGWVTFYWHW and LSVWAWMFLFGHLVWATGFMFLI. Residues His654, Met662, and Tyr670 each contribute to the chlorophyll a site. A phylloquinone-binding site is contributed by Trp671. Residues 707–727 traverse the membrane as a helical segment; sequence LVGLAHFSVGYIFTYAAFLIA.

This sequence belongs to the PsaA/PsaB family. The PsaA/B heterodimer binds the P700 chlorophyll special pair and subsequent electron acceptors. PSI consists of a core antenna complex that captures photons, and an electron transfer chain that converts photonic excitation into a charge separation. The eukaryotic PSI reaction center is composed of at least 11 subunits. The cofactor is P700 is a chlorophyll a/chlorophyll a' dimer, A0 is one or more chlorophyll a, A1 is one or both phylloquinones and FX is a shared 4Fe-4S iron-sulfur center..

It is found in the plastid. Its subcellular location is the chloroplast thylakoid membrane. It carries out the reaction reduced [plastocyanin] + hnu + oxidized [2Fe-2S]-[ferredoxin] = oxidized [plastocyanin] + reduced [2Fe-2S]-[ferredoxin]. In terms of biological role, psaA and PsaB bind P700, the primary electron donor of photosystem I (PSI), as well as the electron acceptors A0, A1 and FX. PSI is a plastocyanin-ferredoxin oxidoreductase, converting photonic excitation into a charge separation, which transfers an electron from the donor P700 chlorophyll pair to the spectroscopically characterized acceptors A0, A1, FX, FA and FB in turn. Oxidized P700 is reduced on the lumenal side of the thylakoid membrane by plastocyanin. This is Photosystem I P700 chlorophyll a apoprotein A2 from Daucus carota (Wild carrot).